We begin with the raw amino-acid sequence, 264 residues long: Phosphonoacetaldehyde hydrolase (264 aa).

Residue Asp10 is the Nucleophile of the active site. Mg(2+) is bound by residues Asp10 and Ala12. Residue Lys52 is the Schiff-base intermediate with substrate of the active site. Asp185 serves as a coordination point for Mg(2+).

It belongs to the HAD-like hydrolase superfamily. PhnX family. In terms of assembly, homodimer. Mg(2+) serves as cofactor.

The catalysed reaction is phosphonoacetaldehyde + H2O = acetaldehyde + phosphate + H(+). Involved in phosphonate degradation. The polypeptide is Phosphonoacetaldehyde hydrolase (Parabacteroides distasonis (strain ATCC 8503 / DSM 20701 / CIP 104284 / JCM 5825 / NCTC 11152)).